Consider the following 802-residue polypeptide: Leucine--tRNA ligase (802 aa).

A 'HIGH' region motif is present at residues 40-51 (PYPSGAGLHVGH). The short motif at 576–580 (KMSKS) is the 'KMSKS' region element. K579 contributes to the ATP binding site.

It belongs to the class-I aminoacyl-tRNA synthetase family.

It is found in the cytoplasm. It carries out the reaction tRNA(Leu) + L-leucine + ATP = L-leucyl-tRNA(Leu) + AMP + diphosphate. In Bacillus cytotoxicus (strain DSM 22905 / CIP 110041 / 391-98 / NVH 391-98), this protein is Leucine--tRNA ligase.